The primary structure comprises 194 residues: tRNA (mnm(5)s(2)U34)-methyltransferase (194 aa).

H33, D34, D52, Q54, S79, and H80 together coordinate S-adenosyl-L-methionine.

This sequence belongs to the methyltransferase superfamily. MnmM family. Homodimer.

The enzyme catalyses 5-aminomethyl-2-thiouridine(34) in tRNA + S-adenosyl-L-methionine = 5-methylaminomethyl-2-thiouridine(34) in tRNA + S-adenosyl-L-homocysteine + H(+). It functions in the pathway tRNA modification. Its function is as follows. Involved in the biosynthesis of 5-methylaminomethyl-2-thiouridine (mnm(5)s(2)U) at the wobble position (U34) in tRNA. Catalyzes the transfer of a methyl group from S-adenosyl-L-methionine to nm(5)s(2)U34 to form mnm(5)s(2)U34. In Bacillus subtilis (strain 168), this protein is tRNA (mnm(5)s(2)U34)-methyltransferase.